Reading from the N-terminus, the 469-residue chain is NADH-quinone oxidoreductase subunit 13 (469 aa).

A run of 14 helical transmembrane segments spans residues Met-1 to Pro-21, Ala-23 to His-43, Val-47 to Leu-67, Gly-69 to Ala-89, Val-91 to Ala-111, Leu-115 to Leu-135, Ala-144 to Leu-164, Ala-190 to Leu-210, Gly-258 to Ala-278, Leu-284 to Thr-304, Ala-308 to Leu-328, Leu-354 to Phe-374, Trp-390 to Phe-410, and Trp-430 to Phe-450.

The protein belongs to the complex I subunit 4 family. As to quaternary structure, NDH-1 is composed of 15 different subunits, Nqo1 to Nqo15. The complex has a L-shaped structure, with the hydrophobic arm (subunits Nqo7, Nqo8 and Nqo10 to Nqo14) embedded in the membrane and the hydrophilic peripheral arm (subunits Nqo1 to Nqo6, Nqo9 and Nqo15) protruding into the bacterial cytoplasm. The hydrophilic domain contains all the redox centers.

Its subcellular location is the cell inner membrane. It carries out the reaction a quinone + NADH + 5 H(+)(in) = a quinol + NAD(+) + 4 H(+)(out). Functionally, NDH-1 shuttles electrons from NADH, via FMN and iron-sulfur (Fe-S) centers, to quinones in the respiratory chain. The immediate electron acceptor for the enzyme in this species is menaquinone. Couples the redox reaction to proton translocation (for every two electrons transferred, four hydrogen ions are translocated across the cytoplasmic membrane), and thus conserves the redox energy in a proton gradient required for the synthesis of ATP. The polypeptide is NADH-quinone oxidoreductase subunit 13 (nqo13) (Thermus thermophilus (strain ATCC 27634 / DSM 579 / HB8)).